Consider the following 111-residue polypeptide: Large ribosomal subunit protein P2B (111 aa).

The segment at 62 to 111 (LASVPSGGAAAGGASASTGAAAGGAAEAEEEKEEEAKEESDDDMGFGLFD) is disordered. The segment covering 67-87 (SGGAAAGGASASTGAAAGGAA) has biased composition (low complexity). The span at 88–105 (EAEEEKEEEAKEESDDDM) shows a compositional bias: acidic residues. S101 is modified (phosphoserine).

Belongs to the eukaryotic ribosomal protein P1/P2 family.

Its function is as follows. Plays an important role in the elongation step of protein synthesis. This Candida albicans (Yeast) protein is Large ribosomal subunit protein P2B (RPP2B).